The sequence spans 263 residues: S-adenosylmethionine decarboxylase proenzyme (263 aa).

The active-site Schiff-base intermediate with substrate; via pyruvic acid is the serine 113. Serine 113 carries the post-translational modification Pyruvic acid (Ser); by autocatalysis. Catalysis depends on histidine 118, which acts as the Proton acceptor; for processing activity. Catalysis depends on cysteine 141, which acts as the Proton donor; for catalytic activity.

It belongs to the prokaryotic AdoMetDC family. Type 2 subfamily. As to quaternary structure, heterooctamer of four alpha and four beta chains arranged as a tetramer of alpha/beta heterodimers. Requires pyruvate as cofactor. Post-translationally, is synthesized initially as an inactive proenzyme. Formation of the active enzyme involves a self-maturation process in which the active site pyruvoyl group is generated from an internal serine residue via an autocatalytic post-translational modification. Two non-identical subunits are generated from the proenzyme in this reaction, and the pyruvate is formed at the N-terminus of the alpha chain, which is derived from the carboxyl end of the proenzyme. The post-translation cleavage follows an unusual pathway, termed non-hydrolytic serinolysis, in which the side chain hydroxyl group of the serine supplies its oxygen atom to form the C-terminus of the beta chain, while the remainder of the serine residue undergoes an oxidative deamination to produce ammonia and the pyruvoyl group blocking the N-terminus of the alpha chain.

It carries out the reaction S-adenosyl-L-methionine + H(+) = S-adenosyl 3-(methylsulfanyl)propylamine + CO2. Its pathway is amine and polyamine biosynthesis; S-adenosylmethioninamine biosynthesis; S-adenosylmethioninamine from S-adenosyl-L-methionine: step 1/1. Its function is as follows. Catalyzes the decarboxylation of S-adenosylmethionine to S-adenosylmethioninamine (dcAdoMet), the propylamine donor required for the synthesis of the polyamines spermine and spermidine from the diamine putrescine. This chain is S-adenosylmethionine decarboxylase proenzyme, found in Marinobacter nauticus (strain ATCC 700491 / DSM 11845 / VT8) (Marinobacter aquaeolei).